The chain runs to 156 residues: MRNPAKQEDLIKAFKALLKEEKFSSQGEIVLALQEEGFENINQSKVSRMLTKFGAVRTRNAKMEMVYCLPAELGVPTTSSPLKNLVLDVDYNDSVVVINTSPGAAQLIARLLDSLGKAEGILGSIAGDDTIFTTPARGFTVKQLHEAILRLFEQEL.

It belongs to the ArgR family.

Its subcellular location is the cytoplasm. Its pathway is amino-acid biosynthesis; L-arginine biosynthesis [regulation]. In terms of biological role, regulates arginine biosynthesis genes. This is Arginine repressor from Yersinia pseudotuberculosis serotype I (strain IP32953).